Reading from the N-terminus, the 164-residue chain is Dehydrin Rab16C (164 aa).

The span at 42–51 (MGGHHAGAGG) shows a compositional bias: gly residues. The segment at 42–164 (MGGHHAGAGG…KIKEKLPGQH (123 aa)) is disordered. The span at 105–115 (GNNHQQQQMMG) shows a compositional bias: low complexity. Positions 128-138 (GMTGAGTGTGV) are enriched in gly residues. Positions 147–164 (GEKKGFMDKIKEKLPGQH) are enriched in basic and acidic residues.

The protein belongs to the plant dehydrin family.

This chain is Dehydrin Rab16C (RAB16C), found in Oryza sativa subsp. indica (Rice).